A 163-amino-acid polypeptide reads, in one-letter code: Nucleotide-binding protein Ava_2001 (163 aa).

It belongs to the YajQ family.

Nucleotide-binding protein. The chain is Nucleotide-binding protein Ava_2001 from Trichormus variabilis (strain ATCC 29413 / PCC 7937) (Anabaena variabilis).